The chain runs to 172 residues: Transcription factor MafF (172 aa).

The basic motif stretch occupies residues 51–76; that stretch reads RLKQRRRTLKNRGYAASCRVKRVCQK. Residues 51–114 form the bZIP domain; that stretch reads RLKQRRRTLK…DALRGKCEAL (64 aa). Residues 79–93 are leucine-zipper; that stretch reads LQKQKSELEREVDKL. The segment at 140–172 is disordered; the sequence is VKSAPSPGPGPAPGPGPASGPGPAPGPAPAACS. Positions 145 to 172 are enriched in pro residues; the sequence is SPGPGPAPGPGPASGPGPAPGPAPAACS.

Belongs to the bZIP family. Maf subfamily. Monomer and homo- or heterodimer. Interacts with MIP. Forms high affinity heterodimers with members of the CNC-bZIP family such as NFE2L1/NRF1.

Its subcellular location is the nucleus. Functionally, since they lack a putative transactivation domain, the small Mafs behave as transcriptional repressors when they dimerize among themselves. However, they seem to serve as transcriptional activators by dimerizing with other (usually larger) basic-zipper proteins, such as NFE2L1/NRF1, and recruiting them to specific DNA-binding sites. Interacts with the upstream promoter region of the oxytocin receptor gene. May be a transcriptional enhancer in the up-regulation of the oxytocin receptor gene at parturition. The protein is Transcription factor MafF (MAFF) of Bos taurus (Bovine).